A 171-amino-acid chain; its full sequence is Protein X (171 aa).

A run of 3 helical transmembrane segments spans residues 11–31, 38–58, and 73–93; these read SWYQ…IYSL, LAGI…VYLM, and AVIA…WLVI.

The protein resides in the virion membrane. The polypeptide is Protein X (VPX) (Mus musculus domesticus (western European house mouse)).